Reading from the N-terminus, the 522-residue chain is TNF receptor-associated factor 6 (522 aa).

Positions 1 to 354 (MSLLNCENSC…EAQQCNGIYI (354 aa)) are interaction with TAX1BP1. The RING-type zinc finger occupies 70–109 (CPICLMALREAVQTPCGHRFCKACIIKSIRDAGHKCPVDN). Residue K124 forms a Glycyl lysine isopeptide (Lys-Gly) (interchain with G-Cter in SUMO); alternate linkage. Residue K124 forms a Glycyl lysine isopeptide (Lys-Gly) (interchain with G-Cter in ubiquitin); alternate linkage. K142 participates in a covalent cross-link: Glycyl lysine isopeptide (Lys-Gly) (interchain with G-Cter in SUMO). TRAF-type zinc fingers lie at residues 150–202 (DHQA…EDKE) and 203–259 (IHDQ…NHLA). Residues 288 to 348 (YISEVRNFQE…DKVAEIEAQQ (61 aa)) are a coiled coil. Residue K319 forms a Glycyl lysine isopeptide (Lys-Gly) (interchain with G-Cter in ubiquitin) linkage. The 150-residue stretch at 350–499 (NGIYIWKIGN…DDTLLVRCEV (150 aa)) folds into the MATH domain. The interaction with TANK stretch occupies residues 355-522 (WKIGNFGMHL…FQPRSTDAGV (168 aa)). K453 is covalently cross-linked (Glycyl lysine isopeptide (Lys-Gly) (interchain with G-Cter in SUMO)).

The protein belongs to the TNF receptor-associated factor family. A subfamily. Homotrimer. Homooligomer. N-terminal region is dimeric while C-terminal region is trimeric; maybe providing a mode of oligomerization. Upon IL1B treatment, forms a complex with PELI1, IRAK1, IRAK4 and MYD88; this complex recruits MAP3K7/TAK1, TAB1 and TAB2 to mediate NF-kappa-B activation. Direct binding of SMAD6 to PELI1 prevents the complex formation and hence negatively regulates IL1R-TLR signaling and eventually NF-kappa-B-mediated gene expression. Binds to TNFRSF5/CD40 and TNFRSF11A/RANK. Associates with NGFR, TNFRSF17, IRAK2, IRAK3, RIPK2, MAP3K1, MAP3K5, MAP3K14, CSK, TRAF, TRAF-interacting protein TRIP and TNF receptor associated protein TDP2. Interacts with IL17R. Interacts with SQSTM1 bridging NTRK1 and NGFR. Forms a ternary complex with SQSTM1 and PRKCZ. Interacts with PELI2 and PELI3. Binds UBE2V1. Interacts with TAX1BP1; this interaction mediates deubiquitination of TRAF6 and inhibition of NF-kappa-B activation. Interacts with ZNF675. Interacts with ARRB1 and ARRB2. Interacts with MAP3K7 and TAB1/MAP3K7IP1; during IL-1 signaling. Interacts with UBE2N. Interacts with TGFBR1, HDAC1 and RANGAP1. Interacts with AKT1, AKT2 and AKT3. Interacts (via TRAF domains) with NUMBL (via C-terminal). Interacts with RBCK1. Interacts with LIMD1 (via LIM domains). Interacts with RSAD2/viperin. Interacts (via C-terminus) with EIF2AK2/PKR (via the kinase catalytic domain). Interacts with ZFAND5. Interacts with IL1RL1. Interacts with TRAFD1. Interacts with AJUBA. Interacts with MAVS/IPS1. Interacts (via TRAF domains) with DYNC2I2 (via WD domains). Interacts with IFIT3 (via N-terminus). Interacts with TICAM2. Interacts with CARD14. Interacts with CD40 and MAP3K8; the interaction is required for ERK activation. Interacts with TICAM1 and this interaction is enhanced in the presence of WDFY1. Interacts with TANK; this interaction increases in response to DNA damage. Interacts with USP10; this interaction increases in response to DNA damage. Interacts with ZC3H12A; this interaction increases in response to DNA damage and is stimulated by TANK. Interacts with WDFY3. Interacts with TRIM13. Interacts with GPS2. Interacts (via C-terminus) with SASH1. Interacts with LRRC19. Interacts with IL17RA and TRAF3IP2. Interacts with TOMM70. Interacts with AMBRA1; interaction is required to mediate 'Lys-63'-linked ubiquitination of ULK1. Interacts with CRBN; this interaction inhibits TLR4-mediated signaling by preventing TRAF6-mediated ubiquitination of ECSIT. Sumoylated on Lys-124, Lys-142 and Lys-453 with SUMO1. In terms of processing, polyubiquitinated on Lys-124 by TRAF3IP2; after cell stimulation with IL17A. Polyubiquitinated on Lys-124; after cell stimulation with IL1B or TGFB. This ligand-induced cell stimulation leads to dimerization/oligomerization of TRAF6 molecules, followed by auto-ubiquitination which involves UBE2N and UBE2V1 and leads to TRAF6 activation. This 'Lys-63' site-specific poly-ubiquitination appears to be associated with the activation of signaling molecules. Endogenous autoubiquitination occurs only for the cytoplasmic form. Deubiquitinated by USP10 in a TANK-dependent manner, leading to the negative regulation of NF-kappaB signaling upon DNA damage. LRRC19 induces 'Lys-63' ubiquitination. Ubiquitinated at Lys-319 by the SCF(FBXL2) complex, leading to its degradation by the proteasome. Post-translationally, (Microbial infection) Deubiquitinated by Epstein-Barr virus BPLF1 on both 'Lys-48' and 'Lys-63'-linked ubiquitin chains; leading to NF-kappa-B signaling inhibition. As to expression, expressed in heart, brain, placenta, lung, liver, skeletal muscle, kidney and pancreas.

The protein resides in the cytoplasm. The protein localises to the cell cortex. It localises to the nucleus. It is found in the lipid droplet. The catalysed reaction is S-ubiquitinyl-[E2 ubiquitin-conjugating enzyme]-L-cysteine + [acceptor protein]-L-lysine = [E2 ubiquitin-conjugating enzyme]-L-cysteine + N(6)-ubiquitinyl-[acceptor protein]-L-lysine.. Its pathway is protein modification; protein ubiquitination. E3 ubiquitin ligase that, together with UBE2N and UBE2V1, mediates the synthesis of 'Lys-63'-linked-polyubiquitin chains conjugated to proteins, such as ECSIT, IKBKG, IRAK1, AKT1 and AKT2. Also mediates ubiquitination of free/unanchored polyubiquitin chain that leads to MAP3K7 activation. Leads to the activation of NF-kappa-B and JUN. Seems to also play a role in dendritic cells (DCs) maturation and/or activation. Represses c-Myb-mediated transactivation, in B-lymphocytes. Adapter protein that seems to play a role in signal transduction initiated via TNF receptor, IL-1 receptor and IL-17 receptor. Regulates osteoclast differentiation by mediating the activation of adapter protein complex 1 (AP-1) and NF-kappa-B, in response to RANK-L stimulation. Together with MAP3K8, mediates CD40 signals that activate ERK in B-cells and macrophages, and thus may play a role in the regulation of immunoglobulin production. Acts as a regulator of the JNK and NF-kappa-B signaling pathways by initiating assembly of heterotypic 'Lys-63'-/'Lys-48'-linked branched ubiquitin chains that are then recognized by TAB2: TRAF6 catalyzes initial 'Lys-63'-linked-polyubiquitin chains that are then branched via 'Lys-48'-linked polyubiquitin by HUWE1. 'Lys-63'-/'Lys-48'-linked branched ubiquitin chains protect 'Lys-63'-linkages from CYLD deubiquitination. Participates also in the TCR signaling by ubiquitinating LAT. The polypeptide is TNF receptor-associated factor 6 (TRAF6) (Homo sapiens (Human)).